The sequence spans 149 residues: MSQKHRILLLNGPNLNLLGKREPGIYGSKTLDEIVADLTHNADELGVTLEHLQSNAEHELVGRIHQAMGQVDFIIINPAAFTHTSVAIRDALLGVAIPFIEVHLSNVHAREPFRHHSYLSDVAKGVICGLGADGYQFALTAAVHQLRAA.

Tyr26 serves as the catalytic Proton acceptor. Asn77, His83, and Asp90 together coordinate substrate. His103 (proton donor) is an active-site residue. Substrate is bound by residues 104–105 (LS) and Arg114.

Belongs to the type-II 3-dehydroquinase family. Homododecamer.

It carries out the reaction 3-dehydroquinate = 3-dehydroshikimate + H2O. The protein operates within metabolic intermediate biosynthesis; chorismate biosynthesis; chorismate from D-erythrose 4-phosphate and phosphoenolpyruvate: step 3/7. Catalyzes a trans-dehydration via an enolate intermediate. This Aeromonas hydrophila subsp. hydrophila (strain ATCC 7966 / DSM 30187 / BCRC 13018 / CCUG 14551 / JCM 1027 / KCTC 2358 / NCIMB 9240 / NCTC 8049) protein is 3-dehydroquinate dehydratase.